The following is a 22-amino-acid chain: Mu-conotoxin TIIIA (22 aa).

3 disulfide bridges follow: cysteine 4/cysteine 16, cysteine 5/cysteine 21, and cysteine 11/cysteine 22. Proline 8 and proline 18 each carry 4-hydroxyproline. Cysteine 22 is subject to Cysteine amide.

This sequence belongs to the conotoxin M superfamily. In terms of tissue distribution, expressed by the venom duct.

Its subcellular location is the secreted. In terms of biological role, mu-conotoxins block voltage-gated sodium channels (Nav). This synthetic toxin reversibly and potently blocks rNav1.4/SCN4A (IC(50) is 9 nM) and rNav1.2/SCN2A (IC(50) is 40 nM). It also moderately blocks rNav1.1/SCN1A, rNav1.3/SCN3A, and rNav1.6/SCN8A. The block of SCN1A and SCN2A is modified when beta-subunits are coexpressed with alpha subunits. Hence, blocks of channels containing beta-1 and beta-3 subunits are more potent (compared to channels without beta subunits), whereas blocks of channels containing beta-2 and beta-4 subunits are less potent (compared to channels without beta subunits). In Conus tulipa (Fish-hunting cone snail), this protein is Mu-conotoxin TIIIA.